Consider the following 217-residue polypeptide: Uracil-DNA glycosylase (217 aa).

The active-site Proton acceptor is Asp-62.

Belongs to the uracil-DNA glycosylase (UDG) superfamily. UNG family.

It localises to the cytoplasm. It catalyses the reaction Hydrolyzes single-stranded DNA or mismatched double-stranded DNA and polynucleotides, releasing free uracil.. Its function is as follows. Excises uracil residues from the DNA which can arise as a result of misincorporation of dUMP residues by DNA polymerase or due to deamination of cytosine. The chain is Uracil-DNA glycosylase from Streptococcus gordonii (strain Challis / ATCC 35105 / BCRC 15272 / CH1 / DL1 / V288).